The sequence spans 220 residues: Probable pterin-4-alpha-carbinolamine dehydratase, chloroplastic (220 aa).

Residues 1–50 constitute a chloroplast transit peptide; sequence MAATSSSPPCNISASSLLLRQPSRSILKVFGLLPPVSRNNRKLGRLTVTR.

Belongs to the pterin-4-alpha-carbinolamine dehydratase family. Interacts with SDIR1. Interacts with AIRP2. In terms of processing, ubiquitinated by SDIR1. Ubiquitination leads to its subsequent degradation, thus controlling abscisic acid (ABA) signaling. Ubiquitinated by AIRP2. Ubiquitination leads to its subsequent degradation, thus controlling abscisic acid (ABA) signaling during drought stress.

Its subcellular location is the plastid. It is found in the chloroplast. It localises to the cell membrane. The protein localises to the nucleus. It carries out the reaction (4aS,6R)-4a-hydroxy-L-erythro-5,6,7,8-tetrahydrobiopterin = (6R)-L-erythro-6,7-dihydrobiopterin + H2O. Functionally, involved in tetrahydrobiopterin biosynthesis. Interacts with and acts downstream of the E3 ubiquitin-protein ligase SDIR1 in abscisic acid (ABA) and salt stress signaling. Regulates the expression of the bZIP transcription factor ABI5, which mediates responses to ABA during seed germination and salt stress. The SDIR1-ATP1/SDIRIP1 complex plays an important role in ABA signaling through the ubiquitination pathway. Acts downstream of AIRP2 in regulation of ABA signaling during drought stress. This chain is Probable pterin-4-alpha-carbinolamine dehydratase, chloroplastic, found in Arabidopsis thaliana (Mouse-ear cress).